Here is a 226-residue protein sequence, read N- to C-terminus: V-type proton ATPase subunit E 1 (226 aa).

Position 2 is an N-acetylalanine (A2). Y56 carries the post-translational modification Phosphotyrosine.

This sequence belongs to the V-ATPase E subunit family. As to quaternary structure, V-ATPase is a heteromultimeric enzyme made up of two complexes: the ATP-hydrolytic V1 complex and the proton translocation V0 complex. The V1 complex consists of three catalytic AB heterodimers that form a heterohexamer, three peripheral stalks each consisting of EG heterodimers, one central rotor including subunits D and F, and the regulatory subunits C and H. The proton translocation complex V0 consists of the proton transport subunit a, a ring of proteolipid subunits c9c'', rotary subunit d, subunits e and f, and the accessory subunits ATP6AP1/Ac45 and ATP6AP2/PRR. Interacts with RABL2/RABL2A; binds preferentially to GTP-bound RABL2. Interacts with ALDOC. Interacts with RAB11B. Expressed in brain (at protein level).

It is found in the apical cell membrane. The protein resides in the cytoplasmic vesicle. Its subcellular location is the secretory vesicle. It localises to the synaptic vesicle membrane. The protein localises to the clathrin-coated vesicle membrane. Its function is as follows. Subunit of the V1 complex of vacuolar(H+)-ATPase (V-ATPase), a multisubunit enzyme composed of a peripheral complex (V1) that hydrolyzes ATP and a membrane integral complex (V0) that translocates protons. V-ATPase is responsible for acidifying and maintaining the pH of intracellular compartments and in some cell types, is targeted to the plasma membrane, where it is responsible for acidifying the extracellular environment. The protein is V-type proton ATPase subunit E 1 (Atp6v1e1) of Rattus norvegicus (Rat).